Reading from the N-terminus, the 252-residue chain is Aquaporin TIP1-2 (252 aa).

Residues 1-23 (MPIGSIAIGAPGEASHPDTIKAS) are Cytoplasmic-facing. The helical transmembrane segment at 24–44 (LAEFISTLIFVFAGEGSGMAF) threads the bilayer. At 45–55 (NKLTNDGSTTP) the chain is on the vacuolar side. A helical transmembrane segment spans residues 56 to 76 (AGLVAASLAHGFALFVAVSVG). Residues 77–103 (ANISGGHVNPAVTFGAFLGGNISLIRG) lie on the Cytoplasmic side of the membrane. The NPA 1 motif lies at 85–87 (NPA). Residues 104–124 (ILYWIAQLLGSVVACLLLKLA) form a helical membrane-spanning segment. At 125–143 (TGGLETSAFSLSSDVSVWN) the chain is on the vacuolar side. A helical transmembrane segment spans residues 144 to 164 (AVVFEIVMTFGLVYTVYATAV). Topologically, residues 165–172 (DPRKGDLG) are cytoplasmic. A helical transmembrane segment spans residues 173–193 (VIAPIAIGFIVGANILAGGAF). Residues 194-219 (DGASMNPAVSFGPAVVSWTWDNHWVY) are Vacuolar-facing. The short motif at 199 to 201 (NPA) is the NPA 2 element. The helical transmembrane segment at 220–240 (WVGPLIGAAIAALVYDGVFIG) threads the bilayer. Residues 241–252 (QATHEQLPPSDY) lie on the Cytoplasmic side of the membrane.

Belongs to the MIP/aquaporin (TC 1.A.8) family. TIP (TC 1.A.8.10) subfamily. Mainly expressed in fruits and leaves, and, to a lower extent, in roots, stems and flowers.

Its subcellular location is the vacuole membrane. Its function is as follows. Water channel required to facilitate the transport of water from the vacuolar compartment to the cytoplasm. This chain is Aquaporin TIP1-2, found in Musa acuminata (Banana).